Reading from the N-terminus, the 207-residue chain is Protein Nef (207 aa).

Glycine 2 is lipidated: N-myristoyl glycine; by host. Serine 6 bears the Phosphoserine; by host mark. The interval 63-66 is acidic; interacts with host PACS1 and PACS2; stabilizes the interaction of NEF/MHC-I with host AP1M1; necessary for MHC-I internalization; it reads EEZE. The SH3-binding; interaction with Src family tyrosine kinases stretch occupies residues 70–79; sequence PVRPQVPLRP. The PxxP; stabilizes the interaction of NEF/MHC-I with host AP1M1; necessary for MHC-I internalization motif lies at 73–76; that stretch reads PQVP. The tract at residues 109–125 is mediates dimerization, Nef-PTE1 interaction; sequence EILDLWVYHTQGFFPDW. The segment at 149 to 181 is binding to ATP6V1H; sequence LSEEAVEEANEGDNNALLHPICQHGVDDDHKQV. The Dileucine internalization motif; necessary for CD4 internalization motif lies at 165-166; it reads LL. Residues 175 to 176 carry the Diacidic; necessary for CD4 internalization motif; the sequence is DD.

This sequence belongs to the lentivirus primate group Nef protein family. As to quaternary structure, monomer; cytosolic form. Homodimer; membrane bound form. Interacts with Nef associated p21-activated kinase (PAK2); this interaction activates PAK2. Associates with the Nef-MHC-I-AP1 complex; this complex is required for MHC-I internalization. Interacts (via C-terminus) with host PI3-kinase. Interacts with host PACS1; this interaction seems to be weak. Interacts with host PACS2. Interacts with host LCK and MAPK3; these interactions inhibit the kinase activity of the latter. Interacts with host ATP6V1H; this interaction may play a role in CD4 endocytosis. Associates with the CD4-Nef-AP2 complex; this complex is required for CD4 internalization. Interacts with host AP2 subunit alpha and AP2 subunit sigma2. Interacts with TCR-zeta chain; this interaction up-regulates the Fas ligand (FasL) surface expression. Interacts with host HCK, LYN, and SRC; these interactions activate the Src family kinases. Interacts with MAP3K5; this interaction inhibits the Fas and TNFR-mediated death signals. Interacts with beta-COP and PTE1. Interacts with human RACK1; this increases Nef phosphorylation by PKC. Interacts with TP53; this interaction decreases the half-life of TP53, protecting the infected cell against p53-mediated apoptosis. Post-translationally, the virion-associated Nef proteins are cleaved by the viral protease to release the soluble C-terminal core protein. Nef is probably cleaved concomitantly with viral structural proteins on maturation of virus particles. In terms of processing, myristoylated. Phosphorylated on serine residues, probably by host PKCdelta and theta.

Its subcellular location is the host cell membrane. The protein localises to the virion. The protein resides in the secreted. It is found in the host Golgi apparatus membrane. In terms of biological role, factor of infectivity and pathogenicity, required for optimal virus replication. Alters numerous pathways of T-lymphocyte function and down-regulates immunity surface molecules in order to evade host defense and increase viral infectivity. Alters the functionality of other immunity cells, like dendritic cells, monocytes/macrophages and NK cells. Functionally, in infected CD4(+) T-lymphocytes, down-regulates the surface MHC-I, mature MHC-II, CD4, CD28, CCR5 and CXCR4 molecules. Mediates internalization and degradation of host CD4 through the interaction of with the cytoplasmic tail of CD4, the recruitment of AP-2 (clathrin adapter protein complex 2), internalization through clathrin coated pits, and subsequent transport to endosomes and lysosomes for degradation. Diverts host MHC-I molecules to the trans-Golgi network-associated endosomal compartments by an endocytic pathway to finally target them for degradation. MHC-I down-regulation may involve AP-1 (clathrin adapter protein complex 1) or possibly Src family kinase-ZAP70/Syk-PI3K cascade recruited by PACS2. In consequence infected cells are masked for immune recognition by cytotoxic T-lymphocytes. Decreasing the number of immune receptors also prevents reinfection by more HIV particles (superinfection). Down-regulates host SERINC3 and SERINC5 thereby excluding these proteins from the viral particles. Virion infectivity is drastically higher when SERINC3 or SERINC5 are excluded from the viral envelope, because these host antiviral proteins impair the membrane fusion event necessary for subsequent virion penetration. Bypasses host T-cell signaling by inducing a transcriptional program nearly identical to that of anti-CD3 cell activation. Interaction with TCR-zeta chain up-regulates the Fas ligand (FasL). Increasing surface FasL molecules and decreasing surface MHC-I molecules on infected CD4(+) cells send attacking cytotoxic CD8+ T-lymphocytes into apoptosis. Its function is as follows. Plays a role in optimizing the host cell environment for viral replication without causing cell death by apoptosis. Protects the infected cells from apoptosis in order to keep them alive until the next virus generation is ready to strike. Inhibits the Fas and TNFR-mediated death signals by blocking MAP3K5/ASK1. Decreases the half-life of TP53, protecting the infected cell against p53-mediated apoptosis. Inhibits the apoptotic signals regulated by the Bcl-2 family proteins through the formation of a Nef/PI3-kinase/PAK2 complex that leads to activation of PAK2 and induces phosphorylation of host BAD. In terms of biological role, extracellular Nef protein targets CD4(+) T-lymphocytes for apoptosis by interacting with CXCR4 surface receptors. The sequence is that of Protein Nef from Homo sapiens (Human).